Reading from the N-terminus, the 665-residue chain is Protein LOW PHOTOSYNTHETIC EFFICIENCY 1, chloroplastic (665 aa).

Residues Met-1–Leu-68 constitute a chloroplast transit peptide. PPR repeat units follow at residues Pro-145–Ser-179, Gly-181–Pro-217, Asn-218–Pro-252, Asn-253–Lys-283, Gly-309–Pro-344, Ser-345–Arg-375, Ser-380–Pro-414, Val-422–Pro-456, Gln-457–Pro-491, Thr-492–Pro-526, Asn-527–Pro-561, Ser-562–Pro-596, and Asn-597–Leu-631.

The protein belongs to the PPR family. P subfamily. In terms of assembly, interacts with HCF173.

It localises to the plastid. It is found in the chloroplast thylakoid membrane. The protein resides in the chloroplast stroma. Required for light-regulated photosystem II (PSII) biogenesis and grana thylakoids formation by binding to the 5' UTR of PSII subunit mRNAs (e.g. psbJ, psbN and psbA) in a light-dependent manner through a redox-based mechanism, and facilitating the association of HCF173 with target mRNAs, which encodes PSII reaction center proteins (e.g. J, N and D1), thus regulating its expression by modulating ribosome loading. This chain is Protein LOW PHOTOSYNTHETIC EFFICIENCY 1, chloroplastic, found in Arabidopsis thaliana (Mouse-ear cress).